Reading from the N-terminus, the 559-residue chain is Cytoplasmic polyadenylation element-binding protein 1 (559 aa).

Residues 222–243 (SRMDHSSSPLTPPPSASPSGSL) form a disordered region. 2 RRM domains span residues 304–401 (CKVF…DAQV) and 423–504 (NTVF…PYLE). Zn(2+)-binding residues include Cys-508, Cys-511, Cys-520, Cys-525, Cys-530, Cys-533, His-538, and His-546.

Belongs to the RRM CPEB family. As to expression, expressed in oocytes (at protein level). During oocyte maturation becomes detectable at stage Ib, and remains ubiquitously distributed within the oocyte cytoplasm until stage II. It then follows a gradual accumulation to the future animal pole during stage III, and remains localized to this pole at stage IV (at protein level). Expressed in oocytes, blastomeres and pre-mid-blastula transition embryos. Its expression during oogenesis is ubiquitous at stages I and II, but gradually accumulated at the periphery of the oocyte in the presumptive animal pole during stage III. Expression was maintained in that region at stage IV, and then became delocalized at stage V to cover a much broader area presumably encompassing the future blastodisc.

It is found in the cytoplasm. Its function is as follows. Sequence-specific RNA-binding protein that regulates mRNA cytoplasmic polyadenylation and translation initiation during oocyte maturation and early development. Binds to the cytoplasmic polyadenylation element (CPE), an uridine-rich sequence element (consensus sequence 5'-UUUUUAU-3') within the mRNA 3'-UTR. The chain is Cytoplasmic polyadenylation element-binding protein 1 (cpeb1) from Danio rerio (Zebrafish).